A 278-amino-acid polypeptide reads, in one-letter code: Shikimate dehydrogenase (NADP(+)) (278 aa).

Shikimate-binding positions include S19–S21 and T66. The Proton acceptor role is filled by K70. Shikimate-binding residues include N91 and D106. NADP(+)-binding positions include G129–A133 and F221. Y223 is a shikimate binding site. Residue G242 coordinates NADP(+).

Belongs to the shikimate dehydrogenase family. In terms of assembly, homodimer.

It carries out the reaction shikimate + NADP(+) = 3-dehydroshikimate + NADPH + H(+). It functions in the pathway metabolic intermediate biosynthesis; chorismate biosynthesis; chorismate from D-erythrose 4-phosphate and phosphoenolpyruvate: step 4/7. Functionally, involved in the biosynthesis of the chorismate, which leads to the biosynthesis of aromatic amino acids. Catalyzes the reversible NADPH linked reduction of 3-dehydroshikimate (DHSA) to yield shikimate (SA). The sequence is that of Shikimate dehydrogenase (NADP(+)) from Anaeromyxobacter sp. (strain K).